Reading from the N-terminus, the 269-residue chain is Ribosomal RNA small subunit methyltransferase J (269 aa).

S-adenosyl-L-methionine is bound by residues 125-126 (ER) and aspartate 179.

This sequence belongs to the methyltransferase superfamily. RsmJ family.

The protein localises to the cytoplasm. It carries out the reaction guanosine(1516) in 16S rRNA + S-adenosyl-L-methionine = N(2)-methylguanosine(1516) in 16S rRNA + S-adenosyl-L-homocysteine + H(+). In terms of biological role, specifically methylates the guanosine in position 1516 of 16S rRNA. This chain is Ribosomal RNA small subunit methyltransferase J, found in Pseudomonas savastanoi pv. phaseolicola (strain 1448A / Race 6) (Pseudomonas syringae pv. phaseolicola (strain 1448A / Race 6)).